The following is a 586-amino-acid chain: Lipoprotein LpqB (586 aa).

Positions 1 to 17 (MVRSVFALVFAAVLLGG) are cleaved as a signal peptide. Cysteine 18 is lipidated: N-palmitoyl cysteine. Cysteine 18 carries S-diacylglycerol cysteine lipidation. A disordered region spans residues 26-45 (APQAIGTVERPAPSNLPKPI).

It belongs to the LpqB lipoprotein family.

Its subcellular location is the cell membrane. The polypeptide is Lipoprotein LpqB (Mycobacterium ulcerans (strain Agy99)).